The primary structure comprises 111 residues: Type III endosome membrane protein TEMP (111 aa).

Topologically, residues 1 to 27 (MIGGNTTIISGAINASTEAPGLGTGGR) are extracellular. A glycan (N-linked (GlcNAc...) asparagine) is linked at Asn-5. Residues 28 to 48 (AWPVLVGVVLGAVVLSILIAL) form a helical; Signal-anchor for type III membrane protein membrane-spanning segment. At 49 to 111 (AAKCHLCRRY…TTGSRDHFSL (63 aa)) the chain is on the cytoplasmic side. The segment at 64–111 (HRPLSSAGGGNRPPVGEDEDDDGFIEDNYIQPGAGEMETTGSRDHFSL) is disordered. Acidic residues predominate over residues 79 to 88 (GEDEDDDGFI).

In terms of tissue distribution, expressed in stomach, kidney, large and small intestine and kidney.

The protein resides in the membrane. Its subcellular location is the early endosome. It localises to the recycling endosome. It is found in the cell membrane. In terms of biological role, may be involved in membrane trafficking between endosomes and plasma membrane. The polypeptide is Type III endosome membrane protein TEMP (Mus musculus (Mouse)).